The following is a 399-amino-acid chain: tRNA-specific 2-thiouridylase MnmA (399 aa).

ATP is bound by residues 21-28 (AMSGGVDS) and Leu-47. Cys-115 (nucleophile) is an active-site residue. Residues Cys-115 and Cys-211 are joined by a disulfide bond. ATP is bound at residue Gly-139. The segment at 161-163 (RDQ) is interaction with tRNA. Cys-211 (cysteine persulfide intermediate) is an active-site residue.

The protein belongs to the MnmA/TRMU family.

It localises to the cytoplasm. The enzyme catalyses S-sulfanyl-L-cysteinyl-[protein] + uridine(34) in tRNA + AH2 + ATP = 2-thiouridine(34) in tRNA + L-cysteinyl-[protein] + A + AMP + diphosphate + H(+). Catalyzes the 2-thiolation of uridine at the wobble position (U34) of tRNA, leading to the formation of s(2)U34. This chain is tRNA-specific 2-thiouridylase MnmA, found in Parvibaculum lavamentivorans (strain DS-1 / DSM 13023 / NCIMB 13966).